We begin with the raw amino-acid sequence, 282 residues long: MEMO1 family protein Cmaq_1590 (282 aa).

The protein belongs to the MEMO1 family.

The polypeptide is MEMO1 family protein Cmaq_1590 (Caldivirga maquilingensis (strain ATCC 700844 / DSM 13496 / JCM 10307 / IC-167)).